Reading from the N-terminus, the 354-residue chain is Malate dehydrogenase 1, peroxisomal (354 aa).

A peroxisomal targeting signal PTS2 region spans residues 6 to 14; the sequence is RIARISAHL. Residues 49–55 and D75 each bind NAD(+); that span reads GAAGGIG. Substrate is bound by residues R122 and R128. Residues N135 and 158–160 each bind NAD(+); that span reads ISN. N160 and R194 together coordinate substrate. H218 serves as the catalytic Proton acceptor. M269 is an NAD(+) binding site.

This sequence belongs to the LDH/MDH superfamily. MDH type 1 family. In terms of assembly, homodimer. As to expression, expressed in rosette leaves at low levels.

Its subcellular location is the peroxisome. It carries out the reaction (S)-malate + NAD(+) = oxaloacetate + NADH + H(+). Functionally, catalyzes a reversible NAD-dependent dehydrogenase reaction involved in central metabolism and redox homeostasis between organelle compartments. Peroxisomal NAD-dependent malate dehydrogenase involved in fatty acid beta-oxidation. Reoxidizes NADH from the beta-oxidation and provides NAD for the conversion of fatty acyl-CoA to acetyl-CoA. Does not participate directly in the glyoxylate cycle. Required for maintenance of photosynthetic rates under photorespiratory conditions, and carbon flow during photorespiration. Supplies NADH reductant to the peroxisomal hydroxypyruvate reductase (HPR), which reduces hydroxypyruvate into glycerate in the photorespiratory cycle. This Arabidopsis thaliana (Mouse-ear cress) protein is Malate dehydrogenase 1, peroxisomal.